The following is a 570-amino-acid chain: Urease subunit alpha (570 aa).

The Urease domain maps to 131 to 570; the sequence is GGMDSHIHFI…LPMAQRYFLF (440 aa). Ni(2+) is bound by residues His136, His138, and Lys219. Lys219 is modified (N6-carboxylysine). His221 contributes to the substrate binding site. Positions 248 and 274 each coordinate Ni(2+). His322 functions as the Proton donor in the catalytic mechanism. Asp362 is a binding site for Ni(2+).

Belongs to the metallo-dependent hydrolases superfamily. Urease alpha subunit family. Heterotrimer of UreA (gamma), UreB (beta) and UreC (alpha) subunits. Three heterotrimers associate to form the active enzyme. The cofactor is Ni cation. Carboxylation allows a single lysine to coordinate two nickel ions.

It is found in the cytoplasm. It catalyses the reaction urea + 2 H2O + H(+) = hydrogencarbonate + 2 NH4(+). It functions in the pathway nitrogen metabolism; urea degradation; CO(2) and NH(3) from urea (urease route): step 1/1. This Rhizobium johnstonii (strain DSM 114642 / LMG 32736 / 3841) (Rhizobium leguminosarum bv. viciae) protein is Urease subunit alpha.